We begin with the raw amino-acid sequence, 429 residues long: Large ribosomal subunit protein mL37 (429 aa).

The transit peptide at 1–29 (MALRPVVLRRAPAHSRGILTRPGPPRPRG) directs the protein to the mitochondrion. The interval 12-45 (PAHSRGILTRPGPPRPRGPLPRTPWTTRGPPPDQ) is disordered. Pro residues predominate over residues 22–33 (PGPPRPRGPLPR).

Belongs to the mitochondrion-specific ribosomal protein mL37 family. In terms of assembly, component of the mitochondrial ribosome large subunit (39S) which comprises a 16S rRNA and about 50 distinct proteins.

It localises to the mitochondrion. The protein is Large ribosomal subunit protein mL37 (MRPL37) of Gallus gallus (Chicken).